The sequence spans 504 residues: MATPVVALVGRPNVGKSTLFNRLTRTRDALVADFPGLTRDRKYGHAHIAGYDFIVIDTGGIDGTEEGVEEKMAEQSLLAIDEADIVLFLVDARAGLTAADIGIANYLRQRQNKITVVVANKTDGIDADSHCAEFYQLGLGEIEQIAASQGRGVTQLMEQVLAPFAEKMENADENDRTSEEEQDEWEQEFDFDSEEDTALIDDALDEELEEEQDKNIKIAIVGRPNVGKSTLTNRILGEDRVVVFDMPGTTRDSIYIPMERDGQQYTLIDTAGVRKRGKVHLAVEKFSVIKTLQAIQDANVVLLTIDARENISDQDLSLLGFILNAGRSLVIVVNKWDGLDQDVKDRVKSELDRRLDFIDFARVHFISALHGSGVGNLFDSIKEAYACATQKMTTSLLTRILQMATDEHQPPMIGGRRIKLKYAHPGGYNPPIIVVHGNQMDKLPDSYKRYLSNYYRKSLKIIGSPIRLLFQEGSNPFAGRKNKLTPNQLRKRKRLMKFIKKAKR.

Residues 4–168 (PVVALVGRPN…QVLAPFAEKM (165 aa)) form the EngA-type G 1 domain. Residues 10-17 (GRPNVGKS), 57-61 (DTGGI), and 120-123 (NKTD) each bind GTP. The span at 168–179 (MENADENDRTSE) shows a compositional bias: basic and acidic residues. Residues 168–191 (MENADENDRTSEEEQDEWEQEFDF) are disordered. Acidic residues predominate over residues 180-191 (EEQDEWEQEFDF). The EngA-type G 2 domain occupies 216-389 (IKIAIVGRPN…SIKEAYACAT (174 aa)). GTP is bound by residues 222–229 (GRPNVGKS), 269–273 (DTAGV), and 334–337 (NKWD). The KH-like domain occupies 390-474 (QKMTTSLLTR…PIRLLFQEGS (85 aa)).

The protein belongs to the TRAFAC class TrmE-Era-EngA-EngB-Septin-like GTPase superfamily. EngA (Der) GTPase family. As to quaternary structure, associates with the 50S ribosomal subunit.

GTPase that plays an essential role in the late steps of ribosome biogenesis. The chain is GTPase Der from Haemophilus influenzae (strain ATCC 51907 / DSM 11121 / KW20 / Rd).